A 291-amino-acid chain; its full sequence is Gamma-sarcoglycan (291 aa).

A helical; Signal-anchor for type II membrane protein membrane pass occupies residues 38–58 (LFVLLLLIVLLVNFALTIWIL). The Extracellular segment spans residues 59 to 291 (RVMWFSPVGM…TCHEHSHLCL (233 aa)). An N-linked (GlcNAc...) asparagine glycan is attached at Asn110. 2 cysteine pairs are disulfide-bonded: Cys265-Cys290 and Cys267-Cys283.

It belongs to the sarcoglycan beta/delta/gamma/zeta family. As to quaternary structure, interacts with the syntrophin SNTA1. Cross-link to form 2 major subcomplexes: one consisting of SGCB, SGCD and SGCG and the other consisting of SGCB and SGCD. The association between SGCB and SGCG is particularly strong while SGCA is loosely associated with the other sarcoglycans. Interacts with FLNC. Disulfide bonds are present.

It is found in the cell membrane. It localises to the sarcolemma. Its subcellular location is the cytoplasm. The protein resides in the cytoskeleton. Its function is as follows. Component of the sarcoglycan complex, a subcomplex of the dystrophin-glycoprotein complex which forms a link between the F-actin cytoskeleton and the extracellular matrix. This chain is Gamma-sarcoglycan (SGCG), found in Bos taurus (Bovine).